Here is a 377-residue protein sequence, read N- to C-terminus: Prostaglandin E synthase 2 (377 aa).

Over Met1–Arg65 the chain is Lumenal. A helical transmembrane segment spans residues Val66 to Ile83. In terms of domain architecture, GST N-terminal spans Leu105–Asp182. Glutathione contacts are provided by residues Val153 and Asp166–Ser167. In terms of domain architecture, GST C-terminal spans Tyr266–Ser377.

This sequence belongs to the GST superfamily. As to quaternary structure, homodimer.

It is found in the golgi apparatus membrane. It catalyses the reaction prostaglandin H2 = prostaglandin E2. The catalysed reaction is prostaglandin H2 = (12S)-hydroxy-(5Z,8E,10E)-heptadecatrienoate + malonaldehyde. It functions in the pathway lipid metabolism; prostaglandin biosynthesis. Its activity is regulated as follows. Isomerase activity is increased by sulfhydril compounds. Dithiothreitol (DTT) is most effective, followed by glutathione (GSH) and 2-mercaptoethanol. In terms of biological role, isomerase that catalyzes the conversion of PGH2 into the more stable prostaglandin E2 (PGE2) (in vitro). The biological function and the GSH-dependent property of PTGES2 is still under debate. In vivo, PTGES2 could form a complex with GSH and heme and would not participate in PGE2 synthesis but would catalyze the degradation of prostaglandin E2 H2 (PGH2) to 12(S)-hydroxy-5(Z),8(E),10(E)-heptadecatrienoic acid (HHT) and malondialdehyde (MDA). This Danio rerio (Zebrafish) protein is Prostaglandin E synthase 2 (ptges2).